We begin with the raw amino-acid sequence, 197 residues long: Holliday junction branch migration complex subunit RuvA (197 aa).

Residues 1-64 form a domain I region; it reads MYDYIKGIYK…DDSINLYGFF (64 aa). The segment at 65–143 is domain II; it reads TEEERDMFNL…NDDIISDIDD (79 aa). Residues 144–154 are flexible linker; the sequence is LDSISNFQLHS. Positions 154–197 are domain III; the sequence is SAEALEALMSLGYSQKESEKALKNVDKENSLEDIIKACLKYLMG.

Belongs to the RuvA family. In terms of assembly, homotetramer. Forms an RuvA(8)-RuvB(12)-Holliday junction (HJ) complex. HJ DNA is sandwiched between 2 RuvA tetramers; dsDNA enters through RuvA and exits via RuvB. An RuvB hexamer assembles on each DNA strand where it exits the tetramer. Each RuvB hexamer is contacted by two RuvA subunits (via domain III) on 2 adjacent RuvB subunits; this complex drives branch migration. In the full resolvosome a probable DNA-RuvA(4)-RuvB(12)-RuvC(2) complex forms which resolves the HJ.

It localises to the cytoplasm. Its function is as follows. The RuvA-RuvB-RuvC complex processes Holliday junction (HJ) DNA during genetic recombination and DNA repair, while the RuvA-RuvB complex plays an important role in the rescue of blocked DNA replication forks via replication fork reversal (RFR). RuvA specifically binds to HJ cruciform DNA, conferring on it an open structure. The RuvB hexamer acts as an ATP-dependent pump, pulling dsDNA into and through the RuvAB complex. HJ branch migration allows RuvC to scan DNA until it finds its consensus sequence, where it cleaves and resolves the cruciform DNA. This Clostridium tetani (strain Massachusetts / E88) protein is Holliday junction branch migration complex subunit RuvA.